Reading from the N-terminus, the 470-residue chain is MSPSTTSKMSLEKMWEEVTCSICLDPMVEPMSIECGHCFCKECIFEVGKNGGSSCPECRQQFLLRNLRPNRHIANMVENLKQIAQNTKKSTQETHCMKHGEKLHLFCEEDGQALCWVCAQSGKHRDHTRVPIEEAAKVYQEKIHVVLEKLRKGKELAEKMEMDLTMQRTDWKRNIDTQKSRIHAEFALQNSLLAQEEQRQLQRLEKDQREYLRLLGKKEAELAEKNQALQELISELERRIRGSELELLQEVRIILERSGSWNLDTLDIDAPDLTSTCPVPGRKKMLRTCWVHITLDRNTANSWLIISKDRRQVRMGDTHQNVSDNKERFSNYPMVLGAQRFSSGKMYWEVDVTQKEAWDLGVCRDSVQRKGQFSLSPENGFWTIWLWQDSYEAGTSPQTTLHIQVPPCQIGIFVDYEAGVVSFYNITDHGSLIYTFSECVFAGPLRPFFNVGFNYSGGNAAPLKLCPLKM.

The RING-type zinc-finger motif lies at C20–R59. Positions 96, 99, 118, and 124 each coordinate Zn(2+). Residues C96 to H127 form a B box-type zinc finger. Positions L188–E250 form a coiled coil. The region spanning D272–M470 is the B30.2/SPRY domain.

The protein belongs to the TRIM/RBCC family. Homotrimer. Component of a SCF(SKP2)-like complex containing CUL1, SKP1, TRIM21 and SKP2. Interacts with CALR, CUL1, FBXW11, HSPA5, IKBKB, IRF3, SKP1 and VCP. Interacts with SKP2; the interaction with SKP2 does not depend on an intact F-box domain. Interacts (via N-terminus and C-terminus) with DCP2 (via N-terminus and C-terminus). Interacts (via C-terminus) with IRF8 (via C-terminus). Interacts with ULK1, BECN1 and with ATG8 family members, including GABARAP, GABARAPL1, GABARAPL2 and MAP1LC3C/LC3C. Interacts with TRIM21 and SQSTM1/sequestosome 1. Interacts with IRF3. Interacts (via the SPRY domain) with NMI (via coiled-coil domain); the interaction promotes 'Lys-63'-linked ubiquitination of NMI. Interacts with IFI35 and NMI; the interaction facilitates NMI-IFI35 complex formation. Autoubiquitinated; does not lead to its proteasomal degradation. Deubiquitinated by USP4; leading to its stabilization. Autoubiquitinated.

Its subcellular location is the cytoplasm. It localises to the cytoplasmic vesicle. The protein resides in the autophagosome. It is found in the nucleus. The protein localises to the P-body. Its subcellular location is the stress granule. It carries out the reaction S-ubiquitinyl-[E2 ubiquitin-conjugating enzyme]-L-cysteine + [acceptor protein]-L-lysine = [E2 ubiquitin-conjugating enzyme]-L-cysteine + N(6)-ubiquitinyl-[acceptor protein]-L-lysine.. Its pathway is protein modification; protein ubiquitination. Functionally, E3 ubiquitin-protein ligase whose activity is dependent on E2 enzymes, UBE2D1, UBE2D2, UBE2E1 and UBE2E2. Forms a ubiquitin ligase complex in cooperation with the E2 UBE2D2 that is used not only for the ubiquitination of USP4 and IKBKB but also for its self-ubiquitination. Component of cullin-RING-based SCF (SKP1-CUL1-F-box protein) E3 ubiquitin-protein ligase complexes such as SCF(SKP2)-like complexes. A TRIM21-containing SCF(SKP2)-like complex is shown to mediate ubiquitination of CDKN1B ('Thr-187' phosphorylated-form), thereby promoting its degradation by the proteasome. Monoubiquitinates IKBKB that will negatively regulates Tax-induced NF-kappa-B signaling. Negatively regulates IFN-beta production post-pathogen recognition by catalyzing polyubiquitin-mediated degradation of IRF3. Mediates the ubiquitin-mediated proteasomal degradation of IgG1 heavy chain, which is linked to the VCP-mediated ER-associated degradation (ERAD) pathway. Promotes IRF8 ubiquitination, which enhanced the ability of IRF8 to stimulate cytokine genes transcription in macrophages. Plays a role in the regulation of the cell cycle progression. Enhances the decapping activity of DCP2. Exists as a ribonucleoprotein particle present in all mammalian cells studied and composed of a single polypeptide and one of four small RNA molecules. At least two isoforms are present in nucleated and red blood cells, and tissue specific differences in RO/SSA proteins have been identified. The common feature of these proteins is their ability to bind HY RNAs.2. Involved in the regulation of innate immunity and the inflammatory response in response to IFNG/IFN-gamma. Organizes autophagic machinery by serving as a platform for the assembly of ULK1, Beclin 1/BECN1 and ATG8 family members and recognizes specific autophagy targets, thus coordinating target recognition with assembly of the autophagic apparatus and initiation of autophagy. Also regulates autophagy through FIP200/RB1CC1 ubiquitination and subsequent decreased protein stability. Represses the innate antiviral response by facilitating the formation of the NMI-IFI35 complex through 'Lys-63'-linked ubiquitination of NMI. During viral infection, promotes cell pyroptosis by mediating 'Lys-6'-linked ubiquitination of ISG12a/IFI27, facilitating its translocation into the mitochondria and subsequent CASP3 activation. When up-regulated through the IFN/JAK/STAT signaling pathway, promotes 'Lys-27'-linked ubiquitination of MAVS, leading to the recruitment of TBK1 and up-regulation of innate immunity. Mediates 'Lys-63'-linked polyubiquitination of G3BP1 in response to heat shock, leading to stress granule disassembly. The polypeptide is E3 ubiquitin-protein ligase TRIM21 (Trim21) (Mus musculus (Mouse)).